An 86-amino-acid chain; its full sequence is Small ribosomal subunit protein bS16 (86 aa).

It belongs to the bacterial ribosomal protein bS16 family.

This chain is Small ribosomal subunit protein bS16, found in Acidithiobacillus ferrooxidans (strain ATCC 23270 / DSM 14882 / CIP 104768 / NCIMB 8455) (Ferrobacillus ferrooxidans (strain ATCC 23270)).